The following is a 418-amino-acid chain: Bifunctional enzyme IspD/IspF (418 aa).

A 2-C-methyl-D-erythritol 4-phosphate cytidylyltransferase region spans residues 1-261 (MADTPALIPQ…EFKRASDMNF (261 aa)). Positions 262 to 418 (RIGEGWDIHA…RATVLLRKFI (157 aa)) are 2-C-methyl-D-erythritol 2,4-cyclodiphosphate synthase. Residues Asp-268 and His-270 each coordinate a divalent metal cation. 4-CDP-2-C-methyl-D-erythritol 2-phosphate is bound by residues 268–270 (DIH) and 294–295 (HS). His-302 lines the a divalent metal cation pocket. Residues 316 to 318 (DIG) and 321 to 325 (FPDTD) contribute to the 4-CDP-2-C-methyl-D-erythritol 2-phosphate site.

The protein in the N-terminal section; belongs to the IspD/TarI cytidylyltransferase family. IspD subfamily. It in the C-terminal section; belongs to the IspF family. The cofactor is a divalent metal cation.

It catalyses the reaction 2-C-methyl-D-erythritol 4-phosphate + CTP + H(+) = 4-CDP-2-C-methyl-D-erythritol + diphosphate. The catalysed reaction is 4-CDP-2-C-methyl-D-erythritol 2-phosphate = 2-C-methyl-D-erythritol 2,4-cyclic diphosphate + CMP. Its pathway is isoprenoid biosynthesis; isopentenyl diphosphate biosynthesis via DXP pathway; isopentenyl diphosphate from 1-deoxy-D-xylulose 5-phosphate: step 2/6. It functions in the pathway isoprenoid biosynthesis; isopentenyl diphosphate biosynthesis via DXP pathway; isopentenyl diphosphate from 1-deoxy-D-xylulose 5-phosphate: step 4/6. In terms of biological role, bifunctional enzyme that catalyzes the formation of 4-diphosphocytidyl-2-C-methyl-D-erythritol from CTP and 2-C-methyl-D-erythritol 4-phosphate (MEP) (IspD), and catalyzes the conversion of 4-diphosphocytidyl-2-C-methyl-D-erythritol 2-phosphate (CDP-ME2P) to 2-C-methyl-D-erythritol 2,4-cyclodiphosphate (ME-CPP) with a corresponding release of cytidine 5-monophosphate (CMP) (IspF). This is Bifunctional enzyme IspD/IspF from Albidiferax ferrireducens (strain ATCC BAA-621 / DSM 15236 / T118) (Rhodoferax ferrireducens).